We begin with the raw amino-acid sequence, 445 residues long: RNA-binding protein asd-2 (445 aa).

Residues 22-63 (TVIPPPPNDSGHEFIGPSSGPPQVTITPSGVQSGSANGVSTS) form a disordered region. A compositionally biased stretch (polar residues) spans 42-63 (PPQVTITPSGVQSGSANGVSTS). The segment at 71 to 128 (EYLSQLLKDKKQLAAFPNVFHHLERLADEEINKVRVVLFQCEFSKESAPLPDAEGDST) is qua1 domain. The region spanning 145 to 171 (NFVGRILGPRGMTAKQLEQETGCKIMV) is the KH domain. Positions 230–253 (APEGEDDLKRKQLMELAIINGTYR) are qua2 domain; involved in RNA binding.

As to quaternary structure, interacts with sup-12; in the presence of RNA, but with weak affinity in the absence of RNA. In terms of tissue distribution, isoform b: Expressed in the hypodermis and pharyngeal muscles. Isoform c: Expressed in body wall muscles and phayngeal muscles.

The protein localises to the nucleus. Functionally, RNA-binding protein that binds to the 5'-NACUAAY-N(1,20)-UAAY-3' consensus sequence in pre-mRNA introns to promote alternative splicing. Required for mutually exclusive alternative splicing where it modulates the switch between mutually exclusive exons during pre-mRNA maturation. Involved in muscle-specific gene expression regulating the alternative splicing of genes such as let-2 and unc-60 to ensure that their respective isoforms are expressed in muscle. Promotes the removal of intron 10 from let-2 pre-mRNA to allow for the exclusive expression of the muscle-specific let-2 isoform (as opposed to the non-muscle-specific isoform expressed in embryos) in body wall muscles during late larval and adult stages of development. Binds cooperatively with RNA-binding protein sup-12 to intron 1A of the unc-60 pre-mRNA to promote alternative splicing and expression of the muscle specific isoform of unc-60. The protein is RNA-binding protein asd-2 of Caenorhabditis elegans.